A 422-amino-acid polypeptide reads, in one-letter code: Glyceraldehyde-3-phosphate dehydrogenase GAPCP1, chloroplastic (422 aa).

Residues Met-1–Ala-69 constitute a chloroplast transit peptide. Polar residues predominate over residues Ser-50 to Ser-63. Residues Ser-50–Ser-84 are disordered. Thr-70 is subject to N-acetylthreonine. NAD(+) contacts are provided by residues Arg-96–Ile-97, Asp-118, and Arg-164. D-glyceraldehyde 3-phosphate-binding positions include Ser-235–Thr-237, Thr-266, Thr-295–Gly-296, and Arg-318. The Nucleophile role is filled by Cys-236. Asn-400 is an NAD(+) binding site.

This sequence belongs to the glyceraldehyde-3-phosphate dehydrogenase family. Homotetramer. In terms of tissue distribution, expressed in shoot and root vasculature, leaf veins and vascular tissue of flowers and siliques.

The protein resides in the plastid. Its subcellular location is the chloroplast stroma. The enzyme catalyses D-glyceraldehyde 3-phosphate + phosphate + NAD(+) = (2R)-3-phospho-glyceroyl phosphate + NADH + H(+). Its function is as follows. Involved in plastidial glycolytic pathway and plays a specific role in glycolytic energy production in non-green plastids and chloroplasts. Essential for breakdown of starch to form sucrose for export to non-photosynthetic tissues, and to generate primary metabolites for anabolic pathways such as fatty acid and amino acid synthesis. Plays an important role in plant development by providing substrates for the phosphorylated pathway of serine biosynthesis in roots. Plays a crucial role in pollen development. Functionally redundant with GAPCP2. This chain is Glyceraldehyde-3-phosphate dehydrogenase GAPCP1, chloroplastic (GAPCP1), found in Arabidopsis thaliana (Mouse-ear cress).